We begin with the raw amino-acid sequence, 177 residues long: Inorganic pyrophosphatase (177 aa).

Positions 31, 45, and 57 each coordinate substrate. Positions 67, 72, and 104 each coordinate Mg(2+). Tyrosine 142 contributes to the substrate binding site.

Belongs to the PPase family. As to quaternary structure, homohexamer. The cofactor is Mg(2+).

The protein localises to the cytoplasm. It catalyses the reaction diphosphate + H2O = 2 phosphate + H(+). Its function is as follows. Catalyzes the hydrolysis of inorganic pyrophosphate (PPi) forming two phosphate ions. This is Inorganic pyrophosphatase from Neisseria meningitidis serogroup B (strain ATCC BAA-335 / MC58).